The primary structure comprises 331 residues: NADH-quinone oxidoreductase subunit H (331 aa).

9 consecutive transmembrane segments (helical) span residues 5–25, 45–65, 78–98, 122–142, 156–176, 192–212, 245–265, 271–291, and 311–331; these read LFFVITTIVKAVVILAVMASL, GPDMVGPAGVLQIVADMIKLF, FIFLIAPLISAIAAFAALAPV, VLYIAGVAAVCVFSPLAAGLA, VVALLSFEVVAGMALLSVVMV, IFNWLIFKQPLAFVLFVMASF, FFIGEYTNMIAASIIITLLFL, FLFIPGALMIILKSSLVFFFF, and WKILLPLGILNVVITGFALLI.

This sequence belongs to the complex I subunit 1 family. In terms of assembly, NDH-1 is composed of 14 different subunits. Subunits NuoA, H, J, K, L, M, N constitute the membrane sector of the complex.

It localises to the cell inner membrane. It carries out the reaction a quinone + NADH + 5 H(+)(in) = a quinol + NAD(+) + 4 H(+)(out). Functionally, NDH-1 shuttles electrons from NADH, via FMN and iron-sulfur (Fe-S) centers, to quinones in the respiratory chain. The immediate electron acceptor for the enzyme in this species is believed to be ubiquinone. Couples the redox reaction to proton translocation (for every two electrons transferred, four hydrogen ions are translocated across the cytoplasmic membrane), and thus conserves the redox energy in a proton gradient. This subunit may bind ubiquinone. This is NADH-quinone oxidoreductase subunit H from Campylobacter concisus (strain 13826).